The chain runs to 128 residues: Probable 4-amino-4-deoxy-L-arabinose-phosphoundecaprenol flippase subunit ArnF (128 aa).

Topologically, residues M1–G2 are cytoplasmic. A helical transmembrane segment spans residues L3 to A23. The Periplasmic segment spans residues A24–D35. Residues F36–G56 traverse the membrane as a helical segment. Residues Y57–A76 are Cytoplasmic-facing. A helical membrane pass occupies residues Y77 to W97. Topologically, residues E98–T100 are periplasmic. A helical transmembrane segment spans residues F101–L121. Topologically, residues P122 to Y128 are cytoplasmic.

This sequence belongs to the ArnF family. As to quaternary structure, heterodimer of ArnE and ArnF.

It localises to the cell inner membrane. It functions in the pathway bacterial outer membrane biogenesis; lipopolysaccharide biosynthesis. Functionally, translocates 4-amino-4-deoxy-L-arabinose-phosphoundecaprenol (alpha-L-Ara4N-phosphoundecaprenol) from the cytoplasmic to the periplasmic side of the inner membrane. In Escherichia coli O9:H4 (strain HS), this protein is Probable 4-amino-4-deoxy-L-arabinose-phosphoundecaprenol flippase subunit ArnF.